The primary structure comprises 199 residues: Imidazoleglycerol-phosphate dehydratase (199 aa).

It belongs to the imidazoleglycerol-phosphate dehydratase family.

The protein localises to the cytoplasm. The catalysed reaction is D-erythro-1-(imidazol-4-yl)glycerol 3-phosphate = 3-(imidazol-4-yl)-2-oxopropyl phosphate + H2O. It participates in amino-acid biosynthesis; L-histidine biosynthesis; L-histidine from 5-phospho-alpha-D-ribose 1-diphosphate: step 6/9. This chain is Imidazoleglycerol-phosphate dehydratase, found in Roseiflexus sp. (strain RS-1).